A 224-amino-acid chain; its full sequence is Thiamine-triphosphatase (224 aa).

Residue Ala-2 is modified to N-acetylalanine. Residues 5–201 (LIEVERKFAP…AKLMVYLQRF (197 aa)) form the CYTH domain. 2 residues coordinate Mg(2+): Glu-7 and Glu-9. Substrate is bound by residues Lys-11, Arg-55, Arg-57, Lys-65, and Arg-125. Mg(2+)-binding residues include Asp-145, Glu-157, and Glu-159. Glu-157 lines the substrate pocket. Lys-193 is a binding site for substrate.

This sequence belongs to the ThTPase family. Monomer. Mg(2+) serves as cofactor.

It localises to the cytoplasm. The enzyme catalyses thiamine triphosphate + H2O = thiamine diphosphate + phosphate + H(+). In terms of biological role, hydrolase highly specific for thiamine triphosphate (ThTP). In Mus musculus (Mouse), this protein is Thiamine-triphosphatase (Thtpa).